A 260-amino-acid polypeptide reads, in one-letter code: UPF0294 protein YPO1077/y3099/YP_2772 (260 aa).

Belongs to the UPF0294 family.

It localises to the cytoplasm. This chain is UPF0294 protein YPO1077/y3099/YP_2772, found in Yersinia pestis.